Here is a 238-residue protein sequence, read N- to C-terminus: Ribitol-5-phosphate cytidylyltransferase 2 (238 aa).

Residues 7–10 (LAGG) and 81–87 (GTDRNET) contribute to the CTP site.

The protein belongs to the IspD/TarI cytidylyltransferase family. TarI subfamily. In terms of assembly, heterodimer together with TarJ.

It catalyses the reaction D-ribitol 5-phosphate + CTP + H(+) = CDP-L-ribitol + diphosphate. The protein operates within cell wall biogenesis; poly(ribitol phosphate) teichoic acid biosynthesis. In terms of biological role, catalyzes the transfer of the cytidylyl group of CTP to D-ribitol 5-phosphate. The chain is Ribitol-5-phosphate cytidylyltransferase 2 from Staphylococcus aureus (strain NCTC 8325 / PS 47).